We begin with the raw amino-acid sequence, 417 residues long: Probable lysophospholipase BODYGUARD 4 (417 aa).

The signal sequence occupies residues 1–49 (MSFPRKFGTAIHAALSFIVFFFLDLLDAILCVVYEFVDEILEENSTGCY). A lipid anchor (N-palmitoyl cysteine) is attached at Cys50. One can recognise an AB hydrolase-1 domain in the interval 150–259 (VIFIHGFMGS…PPYFPSSVEG (110 aa)). The active site involves His154. The active-site Nucleophile is the Ser225. Catalysis depends on charge relay system residues Asp367 and His395.

Expressed in epidermal cells.

It localises to the cell membrane. Its subcellular location is the secreted. The protein resides in the cell wall. Functionally, involved in cuticle development and morphogenesis. This Arabidopsis thaliana (Mouse-ear cress) protein is Probable lysophospholipase BODYGUARD 4.